Here is a 365-residue protein sequence, read N- to C-terminus: DNA replication and repair protein RecF (365 aa).

30 to 37 (GRNAQGKT) contributes to the ATP binding site.

This sequence belongs to the RecF family.

It is found in the cytoplasm. The RecF protein is involved in DNA metabolism; it is required for DNA replication and normal SOS inducibility. RecF binds preferentially to single-stranded, linear DNA. It also seems to bind ATP. This is DNA replication and repair protein RecF from Streptococcus pneumoniae serotype 4 (strain ATCC BAA-334 / TIGR4).